A 260-amino-acid chain; its full sequence is Snake venom serine protease serpentokallikrein-1 (260 aa).

Residues 1–18 (MVLIRVLANLLILQLSYA) form the signal peptide. The propeptide occupies 19-24 (QRTSEL). The Peptidase S1 domain maps to 25 to 251 (VIGGDECNIN…HLDWIKSIIA (227 aa)). 6 cysteine pairs are disulfide-bonded: C31-C165, C52-C68, C102-C258, C144-C212, C176-C191, and C202-C227. Residue H67 is the Charge relay system of the active site. Residues N81 and N105 are each glycosylated (N-linked (GlcNAc...) asparagine). The Charge relay system role is filled by D112. N156 and N172 each carry an N-linked (GlcNAc...) asparagine glycan. The Charge relay system role is filled by S206.

Belongs to the peptidase S1 family. Snake venom subfamily. Monomer. Expressed by the venom gland.

Its subcellular location is the secreted. Functionally, snake venom serine protease that may act in the hemostasis system of the prey. This is Snake venom serine protease serpentokallikrein-1 from Protobothrops mucrosquamatus (Taiwan habu).